Reading from the N-terminus, the 190-residue chain is ADP-ribosylation factor F (190 aa).

GTP contacts are provided by residues 34-40 (DGAGKST), 75-79 (DIGGQ), and 136-139 (NKQD).

It belongs to the small GTPase superfamily. Arf family.

It is found in the golgi apparatus. GTP-binding protein that may be involved in protein trafficking. May modulate vesicle budding and uncoating within the Golgi apparatus. In Dictyostelium discoideum (Social amoeba), this protein is ADP-ribosylation factor F (arrF).